The sequence spans 1062 residues: Platelet-derived growth factor receptor alpha (1062 aa).

A signal peptide spans 1–27; the sequence is MFPPSSAPLLLPQLEELVVPLHTAFTL. Ig-like C2-type domains follow at residues 28–96, 91–184, 190–281, 287–381, and 389–493; these read TCQG…VYVP, IYVY…VHGW, LHVE…KQIA, SEFM…RTVS, and PAVI…IKLV. Residues 28-504 lie on the Extracellular side of the membrane; the sequence is TCQGEATIAW…NGPHPELTVA (477 aa). The cysteines at positions 29 and 74 are disulfide-linked. Residues N79 and N132 are each glycosylated (N-linked (GlcNAc...) asparagine). 2 cysteine pairs are disulfide-bonded: C124-C165 and C211-C265. Residues N273, N333, N366, N433, and N444 are each glycosylated (N-linked (GlcNAc...) asparagine). The cysteines at positions 410 and 477 are disulfide-linked. A helical transmembrane segment spans residues 505–525; that stretch reads AAVLVLLVIVIISLIVLVVIW. Residues 526–1062 lie on the Cytoplasmic side of the membrane; sequence KQKPRYEIRW…CSDLVEDSFL (537 aa). Y548 and Y550 each carry phosphotyrosine; by autocatalysis. A Protein kinase domain is found at 569–945; that stretch reads LVLGRILGSG…HYERVNHEFL (377 aa). Residues 575–583 and K603 contribute to the ATP site; that span reads LGSGAFGKV. Residues Y697, Y708, Y719, Y731, and Y739 each carry the phosphotyrosine; by autocatalysis modification. The interval 734-754 is disordered; sequence LQGSNYDHPPSQKGSNDGEMD. Residue D793 is the Proton acceptor of the active site. Phosphotyrosine; by autocatalysis occurs at positions 824 and 963. The span at 975–986 shows a compositional bias: basic and acidic residues; that stretch reads KDRESGFDEQRL. Residues 975–1034 are disordered; it reads KDRESGFDEQRLSSDSGYIIPLPDLDPISDEEYGKRNRHSSQTSEESAIETGSSSSTFAK. Phosphotyrosine; by autocatalysis is present on Y992. Polar residues predominate over residues 1014–1032; that stretch reads SSQTSEESAIETGSSSSTF.

Belongs to the protein kinase superfamily. Tyr protein kinase family. CSF-1/PDGF receptor subfamily. Interacts with homodimeric pdgfa, pdgfb and pdgfc, and with heterodimers formed by pdgfa and pdgfb. monomer in the absence of bound ligand. Interaction with dimeric pdgfa, pdgfb and/or pdgfc leads to receptor dimerization, where both pdgfra homodimers and heterodimers with pdgfrb are observed. Ubiquitinated, leading to its degradation. In terms of processing, autophosphorylated on tyrosine residues upon ligand binding. Autophosphorylation occurs in trans, i.e. one subunit of the dimeric receptor phosphorylates tyrosine residues on the other subunit.

The protein resides in the cell membrane. The catalysed reaction is L-tyrosyl-[protein] + ATP = O-phospho-L-tyrosyl-[protein] + ADP + H(+). With respect to regulation, present in an inactive conformation in the absence of bound ligand. Binding of pdgfa and/or pdgfb leads to dimerization and activation by autophosphorylation on tyrosine residues. In terms of biological role, tyrosine-protein kinase that acts as a cell-surface receptor for pdgfa, pdgfb and pdgfc and plays an essential role in the regulation of embryonic development, cell proliferation, survival and chemotaxis. Depending on the context, promotes or inhibits cell proliferation and cell migration. Plays an important role in the differentiation of bone marrow-derived mesenchymal stem cells. Required for normal skeleton development. Required for normal development of the gastrointestinal tract. Plays a role in cell migration and chemotaxis in wound healing. Plays a role in platelet activation, secretion of agonists from platelet granules, and in thrombin-induced platelet aggregation. Binding of its cognate ligands - homodimeric pdgfa, homodimeric pdgfb, heterodimers formed by pdgfa and pdgfb or homodimeric pdgfc -leads to the activation of several signaling cascades; the response depends on the nature of the bound ligand and is modulated by the formation of heterodimers between pdgfra and pdgfrb. Phosphorylates pik3r1, plcg1, and ptpn11. Activation of plcg1 leads to the production of the cellular signaling molecules diacylglycerol and inositol 1,4,5-trisphosphate, mobilization of cytosolic Ca(2+) and the activation of protein kinase C. Phosphorylates pik3r1, the regulatory subunit of phosphatidylinositol 3-kinase, and thereby mediates activation of the AKT1 signaling pathway. Mediates activation of hras and of the MAP kinases mapk1/erk2 and/or mapk3/erk1. Promotes activation of STAT family members stat1, stat3 and stat5a and/or stat5b. Receptor signaling is down-regulated by protein phosphatases that dephosphorylate the receptor and its down-stream effectors, and by rapid internalization of the activated receptor. This Takifugu rubripes (Japanese pufferfish) protein is Platelet-derived growth factor receptor alpha (pdgfra).